A 358-amino-acid polypeptide reads, in one-letter code: MACIVEDPQRAGQSNETQIALISGVPDDISKSCLARVPREYHMAMKCVSRRWRDFVCSDEMCDYRNEFNLAESWIYALCRDISGGVFLHMLNPFSSRRSWKRINDYPYIPMREGMGFAVLGKRLFVLGGCGWLEDATDEIYCYDAAMNTWFDVVPPLSTKRCYFACETLDGKIIAIGGLGLNPNAKRTWDIYDPLTRTCKSCSDVNIVPEMEDSFVMDGRIYIRGGVGGSSTAVYSASSGIWERMDDDMASGWRGPAVVVAGDLYVLDQTFGAKLTMWCKDTRMWIHIGKLSQLVMKQPCRLVSIGNSIFVIGKDCSTVVIDVENVRKNKMNGVMVCSSIPKTWDDDIDVISCKSVAI.

Residues 20–67 enclose the F-box domain; that stretch reads ALISGVPDDISKSCLARVPREYHMAMKCVSRRWRDFVCSDEMCDYRNE. 6 Kelch repeats span residues 78 to 122, 123 to 171, 173 to 219, 220 to 269, 271 to 307, and 308 to 355; these read LCRD…VLGK, RLFV…TLDG, IIAI…VMDG, RIYI…VLDQ, FGAK…SIGN, and SIFV…SCKS.

In terms of assembly, part of a SCF (SKP1-cullin-F-box) protein ligase complex. Interacts with SKP1A/ASK1.

Its pathway is protein modification; protein ubiquitination. This chain is F-box/kelch-repeat protein SKIP4 (SKIP4), found in Arabidopsis thaliana (Mouse-ear cress).